The sequence spans 168 residues: Ribosome maturation factor RimM (168 aa).

Residues 95-168 (KEGYYWSDLI…QIMVDWELDY (74 aa)) form the PRC barrel domain.

Belongs to the RimM family. As to quaternary structure, binds ribosomal protein uS19.

The protein resides in the cytoplasm. Functionally, an accessory protein needed during the final step in the assembly of 30S ribosomal subunit, possibly for assembly of the head region. Essential for efficient processing of 16S rRNA. May be needed both before and after RbfA during the maturation of 16S rRNA. It has affinity for free ribosomal 30S subunits but not for 70S ribosomes. The chain is Ribosome maturation factor RimM from Nitrosomonas eutropha (strain DSM 101675 / C91 / Nm57).